The primary structure comprises 430 residues: Histidine--tRNA ligase (430 aa).

Belongs to the class-II aminoacyl-tRNA synthetase family. As to quaternary structure, homodimer.

The protein localises to the cytoplasm. It catalyses the reaction tRNA(His) + L-histidine + ATP = L-histidyl-tRNA(His) + AMP + diphosphate + H(+). The protein is Histidine--tRNA ligase of Acaryochloris marina (strain MBIC 11017).